The sequence spans 216 residues: Ras-related protein RABA1b (216 aa).

20–27 is a binding site for GTP; sequence GDSGVGKS. The Effector region signature appears at 42–50; that stretch reads SKSTIGVEF. GTP contacts are provided by residues 68–72, 126–129, and 156–157; these read DTAGQ, NKSD, and SA. Residues cysteine 213 and cysteine 214 are each lipidated (S-geranylgeranyl cysteine).

It belongs to the small GTPase superfamily. Rab family.

Its subcellular location is the cell membrane. Intracellular vesicle trafficking and protein transport. The polypeptide is Ras-related protein RABA1b (RABA1B) (Arabidopsis thaliana (Mouse-ear cress)).